We begin with the raw amino-acid sequence, 396 residues long: S100P-binding protein (396 aa).

Positions 145-249 (CDPVLDKDKI…RKNSGSHKSG (105 aa)) are disordered. Composition is skewed to basic and acidic residues over residues 148–161 (VLDK…KETE) and 168–185 (EQTR…RCTE). Composition is skewed to polar residues over residues 202-215 (SSPS…TASD) and 227-246 (VFSQ…SGSH).

Interacts with S100P.

It is found in the nucleus. The chain is S100P-binding protein from Mus musculus (Mouse).